A 677-amino-acid chain; its full sequence is Beta-galactosidase (677 aa).

Positions 1-23 (MPGFLVRILPLLLALLLLGPTRG) are cleaved as a signal peptide. A propeptide spanning residues 24 to 28 (LRNAT) is cleaved from the precursor. N26 is a glycosylation site (N-linked (GlcNAc...) asparagine). Positions 83, 129, and 187 each coordinate substrate. The Proton donor role is filled by E188. Cysteines 195 and 230 form a disulfide. N-linked (GlcNAc...) asparagine glycosylation occurs at N247. E268 acts as the Nucleophile in catalysis. Y333 serves as a coordination point for substrate. N-linked (GlcNAc...) asparagine glycans are attached at residues N464, N498, N545, and N555. The cysteines at positions 626 and 634 are disulfide-linked. The interval 654–677 (SKPVEKKLMPSPPQKNKDSWLDHV) is disordered. Basic and acidic residues predominate over residues 668–677 (KNKDSWLDHV).

Belongs to the glycosyl hydrolase 35 family. In terms of assembly, homodimer. May form higher multimers.

The protein resides in the lysosome. It catalyses the reaction Hydrolysis of terminal non-reducing beta-D-galactose residues in beta-D-galactosides.. Cleaves beta-linked terminal galactosyl residues from gangliosides, glycoproteins, and glycosaminoglycans. This chain is Beta-galactosidase (GLB1), found in Pongo abelii (Sumatran orangutan).